The sequence spans 194 residues: FMN-dependent NADH:quinone oxidoreductase (194 aa).

FMN contacts are provided by residues serine 10, 16–18 (SQS), 91–94 (MYNF), and 135–138 (TRGG).

Belongs to the azoreductase type 1 family. In terms of assembly, homodimer. FMN is required as a cofactor.

The enzyme catalyses 2 a quinone + NADH + H(+) = 2 a 1,4-benzosemiquinone + NAD(+). The catalysed reaction is N,N-dimethyl-1,4-phenylenediamine + anthranilate + 2 NAD(+) = 2-(4-dimethylaminophenyl)diazenylbenzoate + 2 NADH + 2 H(+). In terms of biological role, quinone reductase that provides resistance to thiol-specific stress caused by electrophilic quinones. Also exhibits azoreductase activity. Catalyzes the reductive cleavage of the azo bond in aromatic azo compounds to the corresponding amines. This is FMN-dependent NADH:quinone oxidoreductase from Vibrio parahaemolyticus serotype O3:K6 (strain RIMD 2210633).